A 324-amino-acid chain; its full sequence is Glutaminase 2 (324 aa).

Ser75, Asn127, Glu171, Asn178, Tyr202, Tyr254, and Val272 together coordinate substrate.

The protein belongs to the glutaminase family. As to quaternary structure, homotetramer.

It carries out the reaction L-glutamine + H2O = L-glutamate + NH4(+). This chain is Glutaminase 2, found in Halalkalibacterium halodurans (strain ATCC BAA-125 / DSM 18197 / FERM 7344 / JCM 9153 / C-125) (Bacillus halodurans).